Here is a 680-residue protein sequence, read N- to C-terminus: UvrABC system protein B (680 aa).

The region spanning 27 to 192 (SNIEAGVTDQ…ERNDYDFHRG (166 aa)) is the Helicase ATP-binding domain. 40–47 (GVTGSGKT) lines the ATP pocket. Positions 93 to 116 (YYDYYQPEAYVPSSDTYIEKDSSI) match the Beta-hairpin motif. Residues 432 to 594 (QVDDLLGECR…IVPATIRKAV (163 aa)) form the Helicase C-terminal domain. The UVR domain maps to 637–672 (AKQIQQLERDMREAAKELEFERAAELRDRIRLLREH).

The protein belongs to the UvrB family. In terms of assembly, forms a heterotetramer with UvrA during the search for lesions. Interacts with UvrC in an incision complex.

Its subcellular location is the cytoplasm. In terms of biological role, the UvrABC repair system catalyzes the recognition and processing of DNA lesions. A damage recognition complex composed of 2 UvrA and 2 UvrB subunits scans DNA for abnormalities. Upon binding of the UvrA(2)B(2) complex to a putative damaged site, the DNA wraps around one UvrB monomer. DNA wrap is dependent on ATP binding by UvrB and probably causes local melting of the DNA helix, facilitating insertion of UvrB beta-hairpin between the DNA strands. Then UvrB probes one DNA strand for the presence of a lesion. If a lesion is found the UvrA subunits dissociate and the UvrB-DNA preincision complex is formed. This complex is subsequently bound by UvrC and the second UvrB is released. If no lesion is found, the DNA wraps around the other UvrB subunit that will check the other stand for damage. This is UvrABC system protein B from Nitratidesulfovibrio vulgaris (strain DSM 19637 / Miyazaki F) (Desulfovibrio vulgaris).